A 225-amino-acid chain; its full sequence is Urease accessory protein UreE (225 aa).

Residues H171–G215 show a composition bias toward basic and acidic residues. Residues H171 to R225 form a disordered region. The span at H216–R225 shows a compositional bias: basic residues.

The protein belongs to the UreE family.

It is found in the cytoplasm. Its function is as follows. Involved in urease metallocenter assembly. Binds nickel. Probably functions as a nickel donor during metallocenter assembly. This chain is Urease accessory protein UreE, found in Paraburkholderia xenovorans (strain LB400).